The primary structure comprises 750 residues: Photosystem I P700 chlorophyll a apoprotein A1 (750 aa).

Helical transmembrane passes span 70-93, 156-179, 195-219, 291-309, 346-369, 385-411, 433-455, and 531-549; these read VFSA…FHGA, LYCT…FHYH, LNHH…HVSL, IVHH…GHMY, WHAQ…HHMY, LSLF…IFMV, AIIS…LYIH, and FLVH…LILL. Positions 573 and 582 each coordinate [4Fe-4S] cluster. 2 helical membrane-spanning segments follow: residues 589-610 and 664-686; these read HVFL…HFSW and LSAY…MFLF. H675 contacts chlorophyll a'. Chlorophyll a is bound by residues M683 and Y691. W692 serves as a coordination point for phylloquinone. The chain crosses the membrane as a helical span at residues 724-744; it reads AVGVTHYLLGGIATTWAFFLA.

It belongs to the PsaA/PsaB family. In terms of assembly, the PsaA/B heterodimer binds the P700 chlorophyll special pair and subsequent electron acceptors. PSI consists of a core antenna complex that captures photons, and an electron transfer chain that converts photonic excitation into a charge separation. The eukaryotic PSI reaction center is composed of at least 11 subunits. Requires P700 is a chlorophyll a/chlorophyll a' dimer, A0 is one or more chlorophyll a, A1 is one or both phylloquinones and FX is a shared 4Fe-4S iron-sulfur center. as cofactor.

The protein localises to the plastid. Its subcellular location is the chloroplast thylakoid membrane. It catalyses the reaction reduced [plastocyanin] + hnu + oxidized [2Fe-2S]-[ferredoxin] = oxidized [plastocyanin] + reduced [2Fe-2S]-[ferredoxin]. In terms of biological role, psaA and PsaB bind P700, the primary electron donor of photosystem I (PSI), as well as the electron acceptors A0, A1 and FX. PSI is a plastocyanin-ferredoxin oxidoreductase, converting photonic excitation into a charge separation, which transfers an electron from the donor P700 chlorophyll pair to the spectroscopically characterized acceptors A0, A1, FX, FA and FB in turn. Oxidized P700 is reduced on the lumenal side of the thylakoid membrane by plastocyanin. The protein is Photosystem I P700 chlorophyll a apoprotein A1 of Piper cenocladum (Ant piper).